The primary structure comprises 511 residues: GMP synthase [glutamine-hydrolyzing] (511 aa).

The Glutamine amidotransferase type-1 domain maps to leucine 5–aspartate 195. The active-site Nucleophile is the cysteine 82. Catalysis depends on residues histidine 169 and glutamate 171. One can recognise a GMPS ATP-PPase domain in the interval tryptophan 196–arginine 386. Serine 223–serine 229 provides a ligand contact to ATP.

As to quaternary structure, homodimer.

The enzyme catalyses XMP + L-glutamine + ATP + H2O = GMP + L-glutamate + AMP + diphosphate + 2 H(+). It functions in the pathway purine metabolism; GMP biosynthesis; GMP from XMP (L-Gln route): step 1/1. Catalyzes the synthesis of GMP from XMP. The protein is GMP synthase [glutamine-hydrolyzing] of Acetivibrio thermocellus (strain ATCC 27405 / DSM 1237 / JCM 9322 / NBRC 103400 / NCIMB 10682 / NRRL B-4536 / VPI 7372) (Clostridium thermocellum).